An 819-amino-acid polypeptide reads, in one-letter code: Endonuclease MutS2 (819 aa).

Position 339 to 346 (339 to 346 (GPNTGGKT)) interacts with ATP. In terms of domain architecture, Smr spans 744-819 (VDVRGLRVDE…GAGVTVAELA (76 aa)).

The protein belongs to the DNA mismatch repair MutS family. MutS2 subfamily. Homodimer. Binds to stalled ribosomes, contacting rRNA.

In terms of biological role, endonuclease that is involved in the suppression of homologous recombination and thus may have a key role in the control of bacterial genetic diversity. Acts as a ribosome collision sensor, splitting the ribosome into its 2 subunits. Detects stalled/collided 70S ribosomes which it binds and splits by an ATP-hydrolysis driven conformational change. Acts upstream of the ribosome quality control system (RQC), a ribosome-associated complex that mediates the extraction of incompletely synthesized nascent chains from stalled ribosomes and their subsequent degradation. Probably generates substrates for RQC. This Gemmatimonas aurantiaca (strain DSM 14586 / JCM 11422 / NBRC 100505 / T-27) protein is Endonuclease MutS2.